We begin with the raw amino-acid sequence, 211 residues long: MKKNTLSAILMTLFLFISCNNSGKDGNTSANSADESVKGPNLTEISKKITDSNAVLLAVKEVEALLSSIDELAKAIGKKIKNDGSLGDEANHNESLLAGAYTISTLITQKLSKLNGSEGLKEKIAAAKKCSEEFSTKLKDNHAQLGIQGVTDENAKKAILKANAAGKDKGVEELEKLSGSLESLSKAAKEMLANSVKELTSPVVAESPKKP.

An N-terminal signal peptide occupies residues 1-18; that stretch reads MKKNTLSAILMTLFLFIS. Cysteine 19 carries the N-palmitoyl cysteine lipid modification. Cysteine 19 carries the S-diacylglycerol cysteine lipid modification.

Belongs to the OspC lipoprotein family. In terms of assembly, homodimer. Interacts with tick I.ricinus salivary protein Iric-1, Iric-2 and Iric-3. Binds human (host) plasminogen.

Its subcellular location is the cell outer membrane. The protein resides in the cell surface. Major immunodominant protein in mammalian hosts. Required for initial stages of mammalian infection. Inhibits macrophage-mediated phagocytosis of the bacteria. Binds human plasminogen; this probably confers an extracellular protease activity on the bacteria that allows it to traverse tissue. Interaction with tick I.ricinus salivary protein Salp15 protects the bacteria from antibody-mediated killing in vitro and in vivo. The chain is Outer surface protein C from Borreliella burgdorferi (Lyme disease spirochete).